Here is a 233-residue protein sequence, read N- to C-terminus: Large ribosomal subunit protein uL1 (233 aa).

The protein belongs to the universal ribosomal protein uL1 family. In terms of assembly, part of the 50S ribosomal subunit.

In terms of biological role, binds directly to 23S rRNA. The L1 stalk is quite mobile in the ribosome, and is involved in E site tRNA release. Functionally, protein L1 is also a translational repressor protein, it controls the translation of the L11 operon by binding to its mRNA. The protein is Large ribosomal subunit protein uL1 of Shewanella halifaxensis (strain HAW-EB4).